Consider the following 465-residue polypeptide: Box C/D snoRNA protein 1 (465 aa).

A disordered region spans residues 1-72 (MEFAAENEGK…GSRQRPEEIP (72 aa)). Ser-25 carries the phosphoserine modification. Residues 56-70 (EIGDGEEGSRQRPEE) are compositionally biased toward basic and acidic residues. Residues Lys-79, Lys-108, Lys-118, Lys-138, Lys-148, Lys-157, Lys-168, Lys-178, and Lys-195 each participate in a glycyl lysine isopeptide (Lys-Gly) (interchain with G-Cter in SUMO2) cross-link. Zn(2+) is bound by residues Cys-215, Cys-218, Cys-227, Cys-230, Cys-235, Cys-239, His-243, and Cys-249. An HIT-type zinc finger spans residues 215 to 249 (CETCGTEEAKYRCPRCMRYSCSLPCVKKHKAELTC). Lys-454 is covalently cross-linked (Glycyl lysine isopeptide (Lys-Gly) (interchain with G-Cter in SUMO2)).

It belongs to the BCD1 family. As to quaternary structure, interacts with FBL, SNU13, NOP58, NUFIP1, RUVBL1, RUVBL2 and TAF9. Interacts (via HIT-type zinc finger) with the RUVBL1/RUVBL2 complex in the presence of ADP.

In terms of biological role, required for box C/D snoRNAs accumulation involved in snoRNA processing, snoRNA transport to the nucleolus and ribosome biogenesis. The polypeptide is Box C/D snoRNA protein 1 (ZNHIT6) (Pongo abelii (Sumatran orangutan)).